The primary structure comprises 308 residues: Methionyl-tRNA formyltransferase (308 aa).

Position 109 to 112 (109 to 112 (SLLP)) interacts with (6S)-5,6,7,8-tetrahydrofolate.

This sequence belongs to the Fmt family.

It catalyses the reaction L-methionyl-tRNA(fMet) + (6R)-10-formyltetrahydrofolate = N-formyl-L-methionyl-tRNA(fMet) + (6S)-5,6,7,8-tetrahydrofolate + H(+). Attaches a formyl group to the free amino group of methionyl-tRNA(fMet). The formyl group appears to play a dual role in the initiator identity of N-formylmethionyl-tRNA by promoting its recognition by IF2 and preventing the misappropriation of this tRNA by the elongation apparatus. This is Methionyl-tRNA formyltransferase from Salinispora tropica (strain ATCC BAA-916 / DSM 44818 / JCM 13857 / NBRC 105044 / CNB-440).